A 390-amino-acid chain; its full sequence is Altered inheritance of mitochondria protein 6 (390 aa).

A signal peptide spans 1–26 (MLGLKGCLTILIGYVIAVCALFSSRG).

Belongs to the AIM6 family.

In Saccharomyces cerevisiae (strain YJM789) (Baker's yeast), this protein is Altered inheritance of mitochondria protein 6 (AIM6).